Here is a 382-residue protein sequence, read N- to C-terminus: Neuropeptide Y receptor type 2 (382 aa).

The tract at residues M1–P39 is disordered. The Extracellular portion of the chain corresponds to M1 to K46. N-linked (GlcNAc...) asparagine glycosylation occurs at N11. A helical membrane pass occupies residues L47–V67. Residues G68–N87 lie on the Cytoplasmic side of the membrane. A helical membrane pass occupies residues F88–T108. Topologically, residues L109–H125 are extracellular. C124 and C204 are joined by a disulfide. The chain crosses the membrane as a helical span at residues L126 to A146. The Cytoplasmic segment spans residues L147–S166. The chain crosses the membrane as a helical span at residues F167–F187. Topologically, residues R188–G217 are extracellular. The helical transmembrane segment at T218–F238 threads the bilayer. Topologically, residues S239 to K269 are cytoplasmic. The chain crosses the membrane as a helical span at residues M270–L290. At A291–K305 the chain is on the extracellular side. Residues L306–Y326 traverse the membrane as a helical segment. The Cytoplasmic portion of the chain corresponds to G327 to V382. C343 carries the S-palmitoyl cysteine lipid modification. The tract at residues N363–V382 is disordered.

Belongs to the G-protein coupled receptor 1 family.

Its subcellular location is the cell membrane. Receptor for neuropeptide Y and peptide YY. This Sus scrofa (Pig) protein is Neuropeptide Y receptor type 2 (NPY2R).